The chain runs to 1004 residues: 2-oxoglutarate dehydrogenase E1 component (1004 aa).

It belongs to the alpha-ketoglutarate dehydrogenase family. Homodimer. Part of the 2-oxoglutarate dehydrogenase (OGDH) complex composed of E1 (2-oxoglutarate dehydrogenase), E2 (dihydrolipoamide succinyltransferase) and E3 (dihydrolipoamide dehydrogenase); the complex contains multiple copies of the three enzymatic components (E1, E2 and E3). Thiamine diphosphate is required as a cofactor.

The enzyme catalyses N(6)-[(R)-lipoyl]-L-lysyl-[protein] + 2-oxoglutarate + H(+) = N(6)-[(R)-S(8)-succinyldihydrolipoyl]-L-lysyl-[protein] + CO2. E1 component of the 2-oxoglutarate dehydrogenase (OGDH) complex which catalyzes the decarboxylation of 2-oxoglutarate, the first step in the conversion of 2-oxoglutarate to succinyl-CoA and CO(2). The sequence is that of 2-oxoglutarate dehydrogenase E1 component from Brucella suis biovar 1 (strain 1330).